A 73-amino-acid polypeptide reads, in one-letter code: Small ribosomal subunit protein eS27 (73 aa).

The Zn(2+) site is built by cysteine 28, cysteine 31, cysteine 47, and cysteine 50. The segment at 28–50 adopts a C4-type zinc-finger fold; sequence CVDCGNEQIIFGNASTEVKCHIC.

The protein belongs to the eukaryotic ribosomal protein eS27 family. As to quaternary structure, part of the 30S ribosomal subunit. It depends on Zn(2+) as a cofactor.

This chain is Small ribosomal subunit protein eS27, found in Methanopyrus kandleri (strain AV19 / DSM 6324 / JCM 9639 / NBRC 100938).